A 933-amino-acid chain; its full sequence is Neuronal PAS domain-containing protein 4A (933 aa).

The segment at 1–13 (MYRSTKGASKARR) is basic motif; degenerate. The bHLH domain occupies 1–53 (MYRSTKGASKARRDQINAEIRNLKDLLPISDADKSRLSYLHIMSLACMYTRKS). Residues 14–53 (DQINAEIRNLKDLLPISDADKSRLSYLHIMSLACMYTRKS) form a helix-loop-helix motif region. 2 consecutive PAS domains span residues 74-148 (SFYE…PDTD) and 220-290 (TSAS…LREG). The region spanning 295-334 (AEMVVRVETADHSWVWLYMVLQLETGETPIVSNNYIISET) is the PAC domain. The span at 361 to 398 (QESVSLQSPETLSSPDQVFTPGSSGLSGQSFDFSTAAC) shows a compositional bias: polar residues. Disordered regions lie at residues 361 to 451 (QESV…ASSP), 514 to 573 (GSNF…LSSL), and 750 to 776 (DLSSSPPLSPTPSSSSHSSPPSSPSTP). Low complexity-rich tracts occupy residues 399-411 (STGSTEEQGGSSS), 440-451 (EPMASPSSASSP), 538-560 (GQTATVTTTTAPSLSPSAPSNPQ), and 751-769 (LSSSPPLSPTPSSSSHSSP).

Efficient DNA binding requires dimerization with another bHLH protein. In terms of tissue distribution, brain-specific.

It is found in the nucleus. Its function is as follows. Transcription factor expressed in neurons of the brain that regulates the excitatory-inhibitory balance within neural circuits and is required for contextual memory in the hippocampus. Plays a key role in the structural and functional plasticity of neurons. Acts as an early-response transcription factor in both excitatory and inhibitory neurons, where it induces distinct but overlapping sets of late-response genes in these two types of neurons, allowing the synapses that form on inhibitory and excitatory neurons to be modified by neuronal activity in a manner specific to their function within a circuit, thereby facilitating appropriate circuit responses to sensory experience. In Danio rerio (Zebrafish), this protein is Neuronal PAS domain-containing protein 4A (npas4a).